Reading from the N-terminus, the 181-residue chain is Large ribosomal subunit protein uL5c (181 aa).

It belongs to the universal ribosomal protein uL5 family. Part of the 50S ribosomal subunit; contacts the 5S rRNA.

Its subcellular location is the plastid. The protein resides in the chloroplast. In terms of biological role, binds 5S rRNA, forms part of the central protuberance of the 50S subunit. The sequence is that of Large ribosomal subunit protein uL5c (rpl5) from Heterosigma akashiwo (strain NIES-293 / 8280G21-1).